A 95-amino-acid polypeptide reads, in one-letter code: Cobalt transport protein CbiN (95 aa).

2 helical membrane passes run Ile7–Gly27 and Leu67–Tyr87.

This sequence belongs to the CbiN family. As to quaternary structure, forms an energy-coupling factor (ECF) transporter complex composed of an ATP-binding protein (A component, CbiO), a transmembrane protein (T component, CbiQ) and 2 possible substrate-capture proteins (S components, CbiM and CbiN) of unknown stoichimetry.

It is found in the cell membrane. The protein operates within cofactor biosynthesis; adenosylcobalamin biosynthesis. Its function is as follows. Part of the energy-coupling factor (ECF) transporter complex CbiMNOQ involved in cobalt import. The chain is Cobalt transport protein CbiN from Methanothermobacter marburgensis (strain ATCC BAA-927 / DSM 2133 / JCM 14651 / NBRC 100331 / OCM 82 / Marburg) (Methanobacterium thermoautotrophicum).